The following is a 1024-amino-acid chain: Multidrug resistance protein MdtC (1024 aa).

Helical transmembrane passes span 12–32 (VATT…FSLL), 333–353 (EVER…FLFL), 360–380 (LIPA…MYLC), 387–407 (LSLM…IVVL), 431–451 (VGFT…PLLL), 463–483 (FAVT…TLTP), 528–548 (WVMV…ISIP), 853–873 (LWLI…LYES), 875–895 (VHPL…LLAL), 897–917 (LFDA…IGIV), 953–973 (PILM…ISSG), and 984–1004 (ITIV…TPVV).

Belongs to the resistance-nodulation-cell division (RND) (TC 2.A.6) family. MdtC subfamily. Part of a tripartite efflux system composed of MdtA, MdtB and MdtC. MdtC forms a heteromultimer with MdtB.

The protein resides in the cell inner membrane. In Yersinia enterocolitica serotype O:8 / biotype 1B (strain NCTC 13174 / 8081), this protein is Multidrug resistance protein MdtC.